Here is a 447-residue protein sequence, read N- to C-terminus: Glyceraldehyde-3-phosphate dehydrogenase GAPB, chloroplastic (447 aa).

Residues 1–80 constitute a chloroplast transit peptide; the sequence is MATHAALAVS…STPVRGETVA (80 aa). Residues 91 to 92, aspartate 115, and arginine 160 each bind NADP(+); that span reads RI. D-glyceraldehyde 3-phosphate is bound by residues 234–236, threonine 265, arginine 280, 293–294, and arginine 316; these read SCT and TG. Cysteine 235 serves as the catalytic Nucleophile. Residue asparagine 399 participates in NADP(+) binding.

The protein belongs to the glyceraldehyde-3-phosphate dehydrogenase family. Tetramer of either four A chains (GAPDH 2) or two A and two B chains (GAPDH 1). As to expression, expressed in leaves and stems.

The protein resides in the plastid. It localises to the chloroplast membrane. The protein localises to the chloroplast stroma. The catalysed reaction is D-glyceraldehyde 3-phosphate + phosphate + NADP(+) = (2R)-3-phospho-glyceroyl phosphate + NADPH + H(+). It participates in carbohydrate biosynthesis; Calvin cycle. In terms of biological role, involved in the photosynthetic reductive pentose phosphate pathway (Calvin-Benson cycle). Catalyzes the reduction of 1,3-diphosphoglycerate by NADPH. This Arabidopsis thaliana (Mouse-ear cress) protein is Glyceraldehyde-3-phosphate dehydrogenase GAPB, chloroplastic (GAPB).